The primary structure comprises 444 residues: Phosphoglucosamine mutase (444 aa).

The active-site Phosphoserine intermediate is the Ser102. Mg(2+) contacts are provided by Ser102, Asp241, Asp243, and Asp245. A Phosphoserine modification is found at Ser102.

This sequence belongs to the phosphohexose mutase family. The cofactor is Mg(2+). Activated by phosphorylation.

The enzyme catalyses alpha-D-glucosamine 1-phosphate = D-glucosamine 6-phosphate. Catalyzes the conversion of glucosamine-6-phosphate to glucosamine-1-phosphate. This is Phosphoglucosamine mutase from Erwinia tasmaniensis (strain DSM 17950 / CFBP 7177 / CIP 109463 / NCPPB 4357 / Et1/99).